The primary structure comprises 283 residues: ATP synthase gamma chain (283 aa).

Belongs to the ATPase gamma chain family. As to quaternary structure, F-type ATPases have 2 components, CF(1) - the catalytic core - and CF(0) - the membrane proton channel. CF(1) has five subunits: alpha(3), beta(3), gamma(1), delta(1), epsilon(1). CF(0) has three main subunits: a, b and c.

Its subcellular location is the cell membrane. Produces ATP from ADP in the presence of a proton gradient across the membrane. The gamma chain is believed to be important in regulating ATPase activity and the flow of protons through the CF(0) complex. The polypeptide is ATP synthase gamma chain (Clostridium kluyveri (strain NBRC 12016)).